Here is an 854-residue protein sequence, read N- to C-terminus: Protein ROOT HAIR DEFECTIVE 3 homolog 1 (854 aa).

Topologically, residues 1–680 (MDEAAAAEAV…QAHKRGNGRL (680 aa)) are cytoplasmic. Residues 37-252 (GLSYAVVSIM…IAPGGLAGDR (216 aa)) form the GB1/RHD3-type G domain. GTP is bound at residue 47 to 54 (GPQSSGKS). The stretch at 217–242 (ALPSFEEKEEQFREQVQQLRQRFSNS) forms a coiled coil. A helical membrane pass occupies residues 681–701 (PPPWAMVAIAVLGFNEIMTLL). Residues 702-704 (RNP) are Lumenal-facing. A helical membrane pass occupies residues 705-725 (IYLFLLFVGYLLVKALAVQLD). Residues 726-854 (INREFQNGVV…NESNNAYSIV (129 aa)) lie on the Cytoplasmic side of the membrane. Low complexity-rich tracts occupy residues 758–781 (TEQQQQQGHHQDAAAEAPQQQQQP) and 814–828 (VSPSPSSSSSTVTSP). Positions 758 to 854 (TEQQQQQGHH…NESNNAYSIV (97 aa)) are disordered. The span at 842–854 (QPDNESNNAYSIV) shows a compositional bias: polar residues.

Belongs to the TRAFAC class dynamin-like GTPase superfamily. GB1/RHD3 GTPase family. RHD3 subfamily.

The protein resides in the endoplasmic reticulum membrane. Its function is as follows. Probable GTP-binding protein that may be involved in cell development. The sequence is that of Protein ROOT HAIR DEFECTIVE 3 homolog 1 from Oryza sativa subsp. japonica (Rice).